The following is a 70-amino-acid chain: UPF0270 protein VIBHAR_00073 (70 aa).

This sequence belongs to the UPF0270 family.

This Vibrio campbellii (strain ATCC BAA-1116) protein is UPF0270 protein VIBHAR_00073.